The chain runs to 39 residues: MTIDRTYPIFTVRWLAVHGLAIPTVFFLGSISAMQFIQR.

Residues 14-30 form a helical membrane-spanning segment; sequence WLAVHGLAIPTVFFLGS. Heme is bound at residue His18.

The protein belongs to the PsbE/PsbF family. As to quaternary structure, heterodimer of an alpha subunit and a beta subunit. PSII is composed of 1 copy each of membrane proteins PsbA, PsbB, PsbC, PsbD, PsbE, PsbF, PsbH, PsbI, PsbJ, PsbK, PsbL, PsbM, PsbT, PsbX, PsbY, PsbZ, Psb30/Ycf12, at least 3 peripheral proteins of the oxygen-evolving complex and a large number of cofactors. It forms dimeric complexes. Heme b serves as cofactor.

It localises to the plastid membrane. Its function is as follows. This b-type cytochrome is tightly associated with the reaction center of photosystem II (PSII). PSII is a light-driven water:plastoquinone oxidoreductase that uses light energy to abstract electrons from H(2)O, generating O(2) and a proton gradient subsequently used for ATP formation. It consists of a core antenna complex that captures photons, and an electron transfer chain that converts photonic excitation into a charge separation. In Cuscuta gronovii (Common dodder), this protein is Cytochrome b559 subunit beta.